The chain runs to 358 residues: tRNA N6-adenosine threonylcarbamoyltransferase (358 aa).

Fe cation is bound by residues His-122 and His-126. Residues 145–149 (LVSGG), Asp-178, Gly-191, and Asn-287 each bind substrate. Residue Asp-315 coordinates Fe cation.

This sequence belongs to the KAE1 / TsaD family. Fe(2+) serves as cofactor.

Its subcellular location is the cytoplasm. The catalysed reaction is L-threonylcarbamoyladenylate + adenosine(37) in tRNA = N(6)-L-threonylcarbamoyladenosine(37) in tRNA + AMP + H(+). In terms of biological role, required for the formation of a threonylcarbamoyl group on adenosine at position 37 (t(6)A37) in tRNAs that read codons beginning with adenine. Is involved in the transfer of the threonylcarbamoyl moiety of threonylcarbamoyl-AMP (TC-AMP) to the N6 group of A37, together with TsaE and TsaB. TsaD likely plays a direct catalytic role in this reaction. This is tRNA N6-adenosine threonylcarbamoyltransferase from Hydrogenovibrio crunogenus (strain DSM 25203 / XCL-2) (Thiomicrospira crunogena).